Reading from the N-terminus, the 357-residue chain is Protein RecA (357 aa).

Gly67 to Thr74 lines the ATP pocket. The interval Leu335–Phe357 is disordered.

The protein belongs to the RecA family.

It localises to the cytoplasm. Functionally, can catalyze the hydrolysis of ATP in the presence of single-stranded DNA, the ATP-dependent uptake of single-stranded DNA by duplex DNA, and the ATP-dependent hybridization of homologous single-stranded DNAs. It interacts with LexA causing its activation and leading to its autocatalytic cleavage. This is Protein RecA from Shewanella sp. (strain MR-4).